Reading from the N-terminus, the 85-residue chain is MERNSRKVLQGRVISDNLKKTITVLVETYKNHPLYKKRVKYSKKYLAHDEQNQAHIGDKVSIMETRPLSKTKHFRLIEVIEKAIG.

This sequence belongs to the universal ribosomal protein uS17 family. Part of the 30S ribosomal subunit.

In terms of biological role, one of the primary rRNA binding proteins, it binds specifically to the 5'-end of 16S ribosomal RNA. This chain is Small ribosomal subunit protein uS17, found in Spiroplasma citri.